The primary structure comprises 179 residues: M-zodatoxin-Lt4b (179 aa).

Positions 1–22 (MKFSIIALALAVAFVCVAESRS) are cleaved as a signal peptide. The propeptide occupies 23–43 (EEEGYDVSEEIQAEELEEAAR). Residues 40-43 (EAAR) carry the Processing quadruplet motif 1 motif. Gln61 is subject to Glutamine amide. The short motif at 63 to 66 (REDS) is the Inverted processing quadruplet motif 1 element. Positions 63-71 (REDSEDAGR) are excised as a propeptide. Residues 68–71 (DAGR) carry the Processing quadruplet motif 2 motif. Gln89 is modified (glutamine amide). Residues 91–94 (REDT) carry the Inverted processing quadruplet motif 2 motif. Positions 91–99 (REDTEEAGR) are excised as a propeptide. The Processing quadruplet motif 3 signature appears at 96 to 99 (EAGR). Gln117 is subject to Glutamine amide. The Inverted processing quadruplet motif 3 signature appears at 119-122 (REDS). A propeptide spanning residues 119–127 (REDSEEAGR) is cleaved from the precursor. The Processing quadruplet motif 4 motif lies at 124-127 (EAGR). Gln145 carries the glutamine amide modification. An Inverted processing quadruplet motif 4 motif is present at residues 147 to 150 (REDT). The propeptide occupies 147–154 (REDTEEAR). A Processing quadruplet motif 5 motif is present at residues 151–154 (EEAR). Phenylalanine amide is present on Phe178.

It belongs to the cationic peptide 03 (latarcin) family. 04 subfamily. Post-translationally, cleavage of the propeptide depends on the processing quadruplet motif (PQM) (XXXR, with at least one of X being E) and the inverted PQM (RXXX, with at least one of X being E). As to expression, expressed by the venom gland.

Its subcellular location is the secreted. Its function is as follows. M-zodatoxin-Lt4b: Has antimicrobial activity against Gram-positive bacteria (A.globiformis VKM Ac-1112 (MIC=0.3 uM), and B.subtilis VKM B-501 (MIC=1.1 uM)), Gram-negative bacteria (E.coli DH5-alpha (MIC=4.4 uM), E.coli MH1 (MIC=4.4 uM), and P.aeruginosa PAO1 (MIC=&gt;35 uM)), and yeasts (P.pastoris GS115 (MIC=&gt;35 uM), and S.cerevisiae Y190 (MIC=35 uM)). Does not have hemolytic activity against rabbit erythrocytes. Causes paralysis, but is not lethal when injected into insect (M.domestica) larvae. In terms of biological role, shows no antimicrobial activity against Gram-positive bacterium B.subtilis B-501 or Gram-negative bacterium E.coli DH5-alpha at concentration up to 20 uM. The polypeptide is M-zodatoxin-Lt4b (Lachesana tarabaevi (Spider)).